Consider the following 238-residue polypeptide: dITP/XTP pyrophosphatase (238 aa).

7–12 lines the substrate pocket; the sequence is SANQHK. Asp89 functions as the Proton acceptor in the catalytic mechanism. A Mg(2+)-binding site is contributed by Asp89. Residues Ser90, 191–194, Lys217, and 222–223 contribute to the substrate site; these read FGYD and HR.

The protein belongs to the HAM1 NTPase family. In terms of assembly, homodimer. The cofactor is Mg(2+).

The enzyme catalyses XTP + H2O = XMP + diphosphate + H(+). It catalyses the reaction dITP + H2O = dIMP + diphosphate + H(+). The catalysed reaction is ITP + H2O = IMP + diphosphate + H(+). In terms of biological role, pyrophosphatase that catalyzes the hydrolysis of nucleoside triphosphates to their monophosphate derivatives, with a high preference for the non-canonical purine nucleotides XTP (xanthosine triphosphate), dITP (deoxyinosine triphosphate) and ITP. Seems to function as a house-cleaning enzyme that removes non-canonical purine nucleotides from the nucleotide pool, thus preventing their incorporation into DNA/RNA and avoiding chromosomal lesions. In Helicobacter hepaticus (strain ATCC 51449 / 3B1), this protein is dITP/XTP pyrophosphatase.